Here is a 193-residue protein sequence, read N- to C-terminus: Putative 3-methyladenine DNA glycosylase (193 aa).

It belongs to the DNA glycosylase MPG family.

This Francisella tularensis subsp. holarctica (strain FTNF002-00 / FTA) protein is Putative 3-methyladenine DNA glycosylase.